Reading from the N-terminus, the 626-residue chain is MNKLFRSLAFYMLILVISVAIAVQLGGTSQQTTQLVYSDLVRYIQQGEVRSITLSGAYAEGELVSGEKFTVQLPPSSSQAPLVEMLQQHPNIKLDFRQDNTSGIWAMLLQTLVPVVLVLLAFFFIMQQTQGSGNRVMQFGKSRARLVTDDRKRVTFDDVAGIDEVKEELAEIVDFLKHPKRYLELGARIPKGVLLYGPPGTGKTLLAKAVAGEAGVPFFSISGSDFVEMFVGVGASRVRDLFEQAKKNSPCIVFIDEIDAVGRQRGAGYGGGHDEREQTLNQLLVEMDGFSANEGIIIIAATNRPDVLDPALLRPGRFDRQIVIDRPDLKGRLAIFQVHAKGKPLEPDVDLEVLAKRTPGFTGADIANLMNEAALLAARRRKKKISMQDVEDAIDRVLAGGPEKKSRVISEKEKRVTAYHEAGHAVVGHMLPHMDPLHKITIIPRGRAMGYTLFLPVEDRYNISKSEILDRMTMALGGRAAEEITFGEITSGAQDDIERTTQWARRMVTEWGMSEKLGPLTYGMKQDEVFLARDMTRLRNYSEEVAGLIDEEVRKFVHMAYQRAIDILTEHRDALEKVSEVLLEKETLEGKELQDLLEQLLPPRPKPEPLKPRMVGGGTSQVAPAF.

The Cytoplasmic segment spans residues 1-7 (MNKLFRS). Residues 8–28 (LAFYMLILVISVAIAVQLGGT) form a helical membrane-spanning segment. Topologically, residues 29 to 103 (SQQTTQLVYS…LDFRQDNTSG (75 aa)) are extracellular. A helical membrane pass occupies residues 104 to 124 (IWAMLLQTLVPVVLVLLAFFF). The Cytoplasmic portion of the chain corresponds to 125-626 (IMQQTQGSGN…GGTSQVAPAF (502 aa)). ATP is bound at residue 197 to 204 (GPPGTGKT). Zn(2+) is bound at residue H420. E421 is an active-site residue. Positions 424 and 496 each coordinate Zn(2+). The segment at 602–626 (PPRPKPEPLKPRMVGGGTSQVAPAF) is disordered.

It in the central section; belongs to the AAA ATPase family. The protein in the C-terminal section; belongs to the peptidase M41 family. As to quaternary structure, homohexamer. Zn(2+) serves as cofactor.

The protein localises to the cell membrane. In terms of biological role, acts as a processive, ATP-dependent zinc metallopeptidase for both cytoplasmic and membrane proteins. Plays a role in the quality control of integral membrane proteins. The sequence is that of ATP-dependent zinc metalloprotease FtsH 3 from Symbiobacterium thermophilum (strain DSM 24528 / JCM 14929 / IAM 14863 / T).